Here is a 383-residue protein sequence, read N- to C-terminus: Protein FAM217B (383 aa).

Disordered stretches follow at residues 1–70 (MNAG…CQGA), 89–115 (ADED…PPDL), 200–222 (KAKG…KSPG), 232–251 (SKPL…RKKA), 284–325 (QTLE…HIRV), and 338–383 (SCKA…YKLK). A compositionally biased stretch (polar residues) spans 8–43 (NKVQHSKNSSGKRQSKSQVPHASSQPRSSLTAVTQP). Basic and acidic residues predominate over residues 44–56 (TEEKLKESISPEA). A compositionally biased stretch (polar residues) spans 374-383 (GVKQNTYKLK).

This sequence belongs to the FAM217 family.

This Homo sapiens (Human) protein is Protein FAM217B (FAM217B).